We begin with the raw amino-acid sequence, 276 residues long: F420-dependent methylenetetrahydromethanopterin dehydrogenase (276 aa).

Residues 253–276 (TVLRTPHGKEGKTLSKKDLLAKPE) are disordered. A compositionally biased stretch (basic and acidic residues) spans 259–276 (HGKEGKTLSKKDLLAKPE).

The protein belongs to the MTD family. In terms of assembly, found to be tightly associated with methyl-coenzyme M methylreductase.

The catalysed reaction is 5,10-methylenetetrahydromethanopterin + oxidized coenzyme F420-(gamma-L-Glu)(n) + 2 H(+) = 5,10-methenyl-5,6,7,8-tetrahydromethanopterin + reduced coenzyme F420-(gamma-L-Glu)(n). It participates in one-carbon metabolism; methanogenesis from CO(2); 5,10-methylene-5,6,7,8-tetrahydromethanopterin from 5,10-methenyl-5,6,7,8-tetrahydromethanopterin (coenzyme F420 route): step 1/1. With respect to regulation, activity requires salt; 100 mM sodium or potassium salts of chloride, phosphate or sulfate are equally effective. Not inactivated by O(2). Inhibited by hydrogen-producing 5,10-methenyltetrahydromethanopterin hydrogenase which has a higher affinity for their shared substrate. Enzyme is O(2)-stable and strictly dependent on coenzyme F420. Functionally, catalyzes the reversible reduction of methenyl-H(4)MPT(+) to methylene-H(4)MPT. In Methanothermobacter marburgensis (strain ATCC BAA-927 / DSM 2133 / JCM 14651 / NBRC 100331 / OCM 82 / Marburg) (Methanobacterium thermoautotrophicum), this protein is F420-dependent methylenetetrahydromethanopterin dehydrogenase.